The following is a 173-amino-acid chain: VQ motif-containing protein 31 (173 aa).

The VQ motif lies at 27-36 (FREIVQRLTG). T46 bears the Phosphothreonine mark. Disordered regions lie at residues 76 to 105 (EIVK…TSPV) and 143 to 173 (LHPS…SGKP). The segment covering 86–105 (PTGTTPSSKSGNTNLLTSPV) has biased composition (polar residues). Phosphoserine is present on residues S92, S103, S146, and S149. Residues 154–165 (TEPELLTLFPLT) are compositionally biased toward low complexity. T165 bears the Phosphothreonine mark. 2 positions are modified to phosphoserine: S166 and S170.

Phosphorylated on serine and threonine residues by MPK6.

The protein resides in the nucleus. Functionally, may modulate WRKY transcription factor activities. The sequence is that of VQ motif-containing protein 31 from Arabidopsis thaliana (Mouse-ear cress).